A 468-amino-acid chain; its full sequence is Glutamate--tRNA ligase 2 (468 aa).

The short motif at 9 to 19 is the 'HIGH' region element; it reads PSPTGFLHIGG. Positions 238–242 match the 'KMSKS' region motif; that stretch reads KLSKR. K241 serves as a coordination point for ATP.

This sequence belongs to the class-I aminoacyl-tRNA synthetase family. Glutamate--tRNA ligase type 1 subfamily. In terms of assembly, monomer.

The protein resides in the cytoplasm. It catalyses the reaction tRNA(Glu) + L-glutamate + ATP = L-glutamyl-tRNA(Glu) + AMP + diphosphate. Functionally, catalyzes the attachment of glutamate to tRNA(Glu) in a two-step reaction: glutamate is first activated by ATP to form Glu-AMP and then transferred to the acceptor end of tRNA(Glu). This Rhodospirillum centenum (strain ATCC 51521 / SW) protein is Glutamate--tRNA ligase 2.